A 475-amino-acid chain; its full sequence is UDP-N-acetylmuramate--L-alanine ligase (475 aa).

125-131 (GTHGKTT) is a binding site for ATP.

It belongs to the MurCDEF family.

It localises to the cytoplasm. It catalyses the reaction UDP-N-acetyl-alpha-D-muramate + L-alanine + ATP = UDP-N-acetyl-alpha-D-muramoyl-L-alanine + ADP + phosphate + H(+). Its pathway is cell wall biogenesis; peptidoglycan biosynthesis. Functionally, cell wall formation. This chain is UDP-N-acetylmuramate--L-alanine ligase, found in Actinobacillus pleuropneumoniae serotype 5b (strain L20).